The chain runs to 438 residues: Aspartate--tRNA(Asp) ligase (438 aa).

Glu170 lines the L-aspartate pocket. The segment at 192–195 (QLYK) is aspartate. Position 214 (Arg214) interacts with L-aspartate. ATP contacts are provided by residues 214-216 (RAE), 222-224 (RHL), and Glu361. Glu361 and Ser364 together coordinate Mg(2+). Residues Ser364 and Arg368 each contribute to the L-aspartate site. Residue 409-412 (GAER) participates in ATP binding.

It belongs to the class-II aminoacyl-tRNA synthetase family. Type 2 subfamily. In terms of assembly, homodimer. Requires Mg(2+) as cofactor.

The protein localises to the cytoplasm. The catalysed reaction is tRNA(Asp) + L-aspartate + ATP = L-aspartyl-tRNA(Asp) + AMP + diphosphate. Catalyzes the attachment of L-aspartate to tRNA(Asp) in a two-step reaction: L-aspartate is first activated by ATP to form Asp-AMP and then transferred to the acceptor end of tRNA(Asp). The sequence is that of Aspartate--tRNA(Asp) ligase from Pyrococcus horikoshii (strain ATCC 700860 / DSM 12428 / JCM 9974 / NBRC 100139 / OT-3).